A 601-amino-acid chain; its full sequence is Glutathione-regulated potassium-efflux system protein KefB (601 aa).

The next 13 membrane-spanning stretches (helical) occupy residues Ser-4 to Ala-24, Ile-29 to Phe-49, Glu-55 to Leu-75, Ile-87 to Met-107, Ala-115 to Met-135, Val-152 to Gly-172, His-177 to Gly-197, Phe-207 to Gly-227, Leu-230 to Leu-250, Gly-268 to Tyr-288, Leu-291 to Leu-311, Met-324 to Ala-344, and Ala-356 to Val-376. One can recognise an RCK N-terminal domain in the interval Lys-400 to Thr-519.

The protein belongs to the monovalent cation:proton antiporter 2 (CPA2) transporter (TC 2.A.37) family. KefB subfamily. Interacts with the regulatory subunit KefG.

It is found in the cell inner membrane. Its activity is regulated as follows. Activated by adducts between glutathione and electrophiles. Its function is as follows. Pore-forming subunit of a potassium efflux system that confers protection against electrophiles. Catalyzes K(+)/H(+) antiport. This chain is Glutathione-regulated potassium-efflux system protein KefB, found in Escherichia coli (strain K12).